We begin with the raw amino-acid sequence, 289 residues long: Melatonin receptor type 1B (289 aa).

Residues 1-2 (GN) are Cytoplasmic-facing. Residues 3–23 (AFVVSLALADLVVALYPYPLV) traverse the membrane as a helical segment. The Extracellular portion of the chain corresponds to 24–41 (LLAIFHNGWTLGEMHCKV). A disulfide bridge links Cys39 with Cys116. A helical membrane pass occupies residues 42 to 62 (SGFVMGLSVIGSIFNITAIAI). Residues 63–81 (NRYCYICHSFAYDKVYSCW) are Cytoplasmic-facing. Residues 82-102 (NTMLYVSLIWVLTVIATVPNF) traverse the membrane as a helical segment. Residues 103-126 (FVGSLKYDPRIYSCTFVQTASSYY) lie on the Extracellular side of the membrane. The helical transmembrane segment at 127 to 147 (TIAVVVIHFIVPITVVSFCYL) threads the bilayer. At 148-179 (RIWVLVLQVRRRVKSETKPRLKPSDFRNFLTM) the chain is on the cytoplasmic side. The helical transmembrane segment at 180–200 (FVVFVIFAFCWAPLNFIGLAV) threads the bilayer. The Extracellular portion of the chain corresponds to 201–213 (AINPSEMAPKVPE). The chain crosses the membrane as a helical span at residues 214–234 (WLFIISYFMAYFNSCLNAIIY). Topologically, residues 235–289 (GLLNQNFRNEYKRILMSLWMPRLFFQDTSKGGTDGQKSKPSPALNNNDQMKTDTL) are cytoplasmic. Residues 264-289 (KGGTDGQKSKPSPALNNNDQMKTDTL) are disordered.

Belongs to the G-protein coupled receptor 1 family. In terms of tissue distribution, brain and kidney, with trace levels in lungs.

It is found in the cell membrane. Functionally, high affinity receptor for melatonin. The activity of this receptor is mediated by pertussis toxin sensitive G proteins that inhibits adenylate cyclase activity. This is Melatonin receptor type 1B from Gallus gallus (Chicken).